The sequence spans 563 residues: NAD-dependent malic enzyme (563 aa).

Y101 (proton donor) is an active-site residue. An NAD(+)-binding site is contributed by R154. K172 (proton acceptor) is an active-site residue. A divalent metal cation-binding residues include E243, D244, and D267. NAD(+) contacts are provided by D267 and N416.

The protein belongs to the malic enzymes family. In terms of assembly, homotetramer. Mg(2+) is required as a cofactor. It depends on Mn(2+) as a cofactor.

The enzyme catalyses (S)-malate + NAD(+) = pyruvate + CO2 + NADH. It carries out the reaction oxaloacetate + H(+) = pyruvate + CO2. The polypeptide is NAD-dependent malic enzyme (Pseudomonas syringae pv. syringae (strain B728a)).